The chain runs to 737 residues: Autophagy-related protein 22 (737 aa).

The disordered stretch occupies residues 115 to 154; that stretch reads RMSPANAGDNSDSYPYGDDTDGDSSSGLPPPRYPGDDTRP. Residues 125-141 show a composition bias toward low complexity; that stretch reads SDSYPYGDDTDGDSSSG. Transmembrane regions (helical) follow at residues 166 to 186, 232 to 252, 264 to 284, and 289 to 309; these read YAFA…PILL, SFAM…VVSI, KLLL…IFIS, and LIGA…FVLL. Positions 327 to 353 are disordered; it reads GDYGSPGYATTEEGDDEDDEYQEDSTR. Over residues 338–349 the composition is skewed to acidic residues; that stretch reads EEGDDEDDEYQE. N-linked (GlcNAc...) asparagine glycosylation occurs at Asn-354. Residues 395–415 form a helical membrane-spanning segment; sequence GIGIGYIAGLFLQCVAIAILI. N-linked (GlcNAc...) asparagine glycosylation is present at Asn-419. 7 helical membrane-spanning segments follow: residues 426–446, 487–507, 524–544, 559–579, 593–613, 632–652, and 661–681; these read IVLC…AMWL, LVDI…IATT, WALG…AFSW, ILAC…GYLP, WEMY…SGYC, LYAI…GAII, and AFWF…FINV.

This sequence belongs to the ATG22 family.

The protein localises to the vacuole membrane. In terms of biological role, vacuolar effluxer which mediate the efflux of amino acids resulting from autophagic degradation. The release of autophagic amino acids allows the maintenance of protein synthesis and viability during nitrogen starvation. This Neurospora crassa (strain ATCC 24698 / 74-OR23-1A / CBS 708.71 / DSM 1257 / FGSC 987) protein is Autophagy-related protein 22 (apg-11).